A 246-amino-acid polypeptide reads, in one-letter code: Probable transcriptional regulatory protein WD_0484 (246 aa).

The disordered stretch occupies residues 1–22; it reads MAGHSQFSNIKHRKGAQDAKRS.

It belongs to the TACO1 family.

The protein resides in the cytoplasm. This chain is Probable transcriptional regulatory protein WD_0484, found in Wolbachia pipientis wMel.